A 130-amino-acid chain; its full sequence is Holo-[acyl-carrier-protein] synthase (130 aa).

Mg(2+)-binding residues include aspartate 8 and glutamate 62.

The protein belongs to the P-Pant transferase superfamily. AcpS family. It depends on Mg(2+) as a cofactor.

It localises to the cytoplasm. The enzyme catalyses apo-[ACP] + CoA = holo-[ACP] + adenosine 3',5'-bisphosphate + H(+). Functionally, transfers the 4'-phosphopantetheine moiety from coenzyme A to a Ser of acyl-carrier-protein. This chain is Holo-[acyl-carrier-protein] synthase, found in Acidovorax ebreus (strain TPSY) (Diaphorobacter sp. (strain TPSY)).